A 905-amino-acid polypeptide reads, in one-letter code: Tight junction protein ZO-3 (905 aa).

One can recognise a PDZ 1 domain in the interval 11–93 (TATLYKDPRR…TANVTVKRPR (83 aa)). Residues 92–167 (PRRVQLPATK…GGGSEANGLD (76 aa)) form a disordered region. S111 and S128 each carry phosphoserine. Residues 124–133 (GDSSSGSGRS) are compositionally biased toward low complexity. The span at 139 to 155 (RRSRAGRRGRVGSHGRR) shows a compositional bias: basic residues. 5 positions are modified to phosphoserine: S156, S157, S161, S195, and S311. The region spanning 187 to 264 (SVLVKRRNSE…ELTLLVLRDS (78 aa)) is the PDZ 2 domain. The segment at 289–367 (LTSELSQAPP…QSLEDRGYSP (79 aa)) is disordered. T317 is subject to Phosphothreonine. S319, S343, and S359 each carry phosphoserine. In terms of domain architecture, PDZ 3 spans 368–434 (DTRVVSFPKG…LTREEAVQFL (67 aa)). Positions 464 to 541 (GDSFYIRTHF…PNQSRAEQLA (78 aa)) constitute an SH3 domain. The 182-residue stretch at 573-754 (RRGTKKASTQ…WYQEVKAVIQ (182 aa)) folds into the Guanylate kinase-like domain. At S584 the chain carries Phosphoserine. Disordered regions lie at residues 773 to 818 (EDLD…PQDV) and 850 to 905 (TDKW…ATDL). Basic and acidic residues predominate over residues 851–877 (DKWETQADSHYTQDQRRQDSMRTYKHE). A phosphoserine mark is found at S891 and S892.

This sequence belongs to the MAGUK family. As to quaternary structure, interacts with occludin OCLN, claudins and TPJ1. Interacts with PATJ. Interacts with UBN1. Interacts with FASLG. Interacts with CCND1. In terms of processing, phosphorylated. Is concentrated in various types of epithelium, in tissues such as the lung, liver and kidney, but not in endothelium or at cadherin-based cell-cell adhesion sites.

The protein resides in the cell membrane. It is found in the cell junction. Its subcellular location is the tight junction. It localises to the nucleus. In terms of biological role, tjp1, Tjp2, and Tjp3 are closely related scaffolding proteins that link tight junction (TJ) transmembrane proteins such as claudins, junctional adhesion molecules, and occludin to the actin cytoskeleton. The tight junction acts to limit movement of substances through the paracellular space and as a boundary between the compositionally distinct apical and basolateral plasma membrane domains of epithelial and endothelial cells. Binds and recruits PatJ to tight junctions where it connects and stabilizes apical and lateral components of tight junctions. Promotes cell-cycle progression through the sequestration of cyclin D1 (Ccnd1) at tight junctions during mitosis which prevents Ccnd1 degradation during M-phase and enables S-phase transition. With Tjp1 and Tjp2, participates in the junctional retention and stability of the transcription factor DbpA, but is not involved in its shuttling to the nucleus. Contrary to Tjp2, Tjp3 is dispensable for individual viability, embryonic development, epithelial differentiation, and the establishment of TJs, at least in the laboratory environment. The sequence is that of Tight junction protein ZO-3 (Tjp3) from Mus musculus (Mouse).